The primary structure comprises 271 residues: Acyl-[acyl-carrier-protein]--UDP-N-acetylglucosamine O-acyltransferase (271 aa).

It belongs to the transferase hexapeptide repeat family. LpxA subfamily. In terms of assembly, homotrimer.

It localises to the cytoplasm. The enzyme catalyses a (3R)-hydroxyacyl-[ACP] + UDP-N-acetyl-alpha-D-glucosamine = a UDP-3-O-[(3R)-3-hydroxyacyl]-N-acetyl-alpha-D-glucosamine + holo-[ACP]. The protein operates within glycolipid biosynthesis; lipid IV(A) biosynthesis; lipid IV(A) from (3R)-3-hydroxytetradecanoyl-[acyl-carrier-protein] and UDP-N-acetyl-alpha-D-glucosamine: step 1/6. Involved in the biosynthesis of lipid A, a phosphorylated glycolipid that anchors the lipopolysaccharide to the outer membrane of the cell. The chain is Acyl-[acyl-carrier-protein]--UDP-N-acetylglucosamine O-acyltransferase from Agrobacterium fabrum (strain C58 / ATCC 33970) (Agrobacterium tumefaciens (strain C58)).